The sequence spans 132 residues: Large ribosomal subunit protein uL22c (132 aa).

Belongs to the universal ribosomal protein uL22 family. In terms of assembly, part of the 50S ribosomal subunit.

The protein resides in the plastid. It localises to the chloroplast. In terms of biological role, this protein binds specifically to 23S rRNA. Its function is as follows. The globular domain of the protein is located near the polypeptide exit tunnel on the outside of the subunit, while an extended beta-hairpin is found that lines the wall of the exit tunnel in the center of the 70S ribosome. This is Large ribosomal subunit protein uL22c (rpl22) from Populus trichocarpa (Western balsam poplar).